We begin with the raw amino-acid sequence, 210 residues long: Neurotrophin-4 (210 aa).

An N-terminal signal peptide occupies residues 1–24 (MLPLPSCSLPILLLFLLPSVPIES). A propeptide spanning residues 25 to 80 (QPPPSTLPPFLAPEWDLLSPRVVLSRGAPAGPPLLFLLEAGAFRESAGAPANRSRR) is cleaved from the precursor. Asparagine 76 carries an N-linked (GlcNAc...) asparagine glycan. Disulfide bonds link cysteine 97/cysteine 170, cysteine 141/cysteine 199, and cysteine 158/cysteine 201.

This sequence belongs to the NGF-beta family. As to expression, highest levels in prostate, lower levels in thymus, placenta, and skeletal muscle. Expressed in embryonic and adult tissues.

It localises to the secreted. Functionally, target-derived survival factor for peripheral sensory sympathetic neurons. May promote ameloblast differentiation and subsequent reduction in proliferation of ameloblasts. This Homo sapiens (Human) protein is Neurotrophin-4 (NTF4).